Consider the following 393-residue polypeptide: Isocitrate dehydrogenase [NADP] (393 aa).

Residues Ser102, Asn104, Arg108, Arg118, and Arg142 each coordinate D-threo-isocitrate. Position 283 (Asp283) interacts with Mg(2+).

This sequence belongs to the isocitrate and isopropylmalate dehydrogenases family. Homodimer. Mg(2+) serves as cofactor. It depends on Mn(2+) as a cofactor.

It catalyses the reaction D-threo-isocitrate + NADP(+) = 2-oxoglutarate + CO2 + NADPH. Functionally, catalyzes the oxidative decarboxylation of isocitrate to 2-oxoglutarate and carbon dioxide with the concomitant reduction of NADP(+). The chain is Isocitrate dehydrogenase [NADP] (icd) from Streptococcus mutans serotype c (strain ATCC 700610 / UA159).